Reading from the N-terminus, the 581-residue chain is Pyridine nucleotide-disulfide oxidoreductase domain-containing protein 2 (581 aa).

38–71 is an FAD binding site; sequence VVIGAGHNGLVVAAYLQRLGVNTAVFERRHVIGG.

Belongs to the carotenoid/retinoid oxidoreductase family. Interacts with COX5B; this interaction may contribute to localize PYROXD2 to the inner face of the inner mitochondrial membrane.

It localises to the mitochondrion matrix. In terms of biological role, probable oxidoreductase that may play a role as regulator of mitochondrial function. This chain is Pyridine nucleotide-disulfide oxidoreductase domain-containing protein 2, found in Pongo abelii (Sumatran orangutan).